The chain runs to 244 residues: Glutathione S-transferase theta-2 (244 aa).

Residues 2-82 (GLELYLDLLS…YLSSKYQVAD (81 aa)) enclose the GST N-terminal domain. Glutathione contacts are provided by residues 40 to 41 (HL), 53 to 54 (KV), 66 to 67 (ES), and 104 to 107 (DNIR). Residues 88 to 230 (DLQARAQVHE…AKKTLPVPPP (143 aa)) enclose the GST C-terminal domain.

Belongs to the GST superfamily. Theta family. Homodimer. In terms of tissue distribution, highest values found in liver followed by testis, adrenal gland, kidney, lung, brain and skeletal muscle. In liver, highest expression found in central vein limiting plate hepatocytes. In lung, expressed mainly in club cells of the bronchiolar epithelium and, at low levels, in type II alveolar cells.

Its subcellular location is the cytoplasm. It is found in the cytosol. It localises to the nucleus. The enzyme catalyses RX + glutathione = an S-substituted glutathione + a halide anion + H(+). In terms of biological role, catalyzes the inactivation of reactive sulfate esters in carcinogenic arylmethanols. Highest activity towards ethacrynic acid and cumene hydroperoxide. The protein is Glutathione S-transferase theta-2 (Gstt2) of Rattus norvegicus (Rat).